The primary structure comprises 534 residues: MFS transporter fmqE (534 aa).

A run of 12 helical transmembrane segments spans residues 48-68 (LLLF…VCAS), 109-129 (LWTS…GFLA), 136-156 (WTAV…VFSS), 169-189 (GAVV…VAPI), 194-214 (ALLQ…LGIV), 228-248 (IVFG…FLVP), 326-346 (AIGV…GLNV), 349-369 (VFDI…LGWL), 379-399 (LWLW…ALGF), 407-427 (LAIA…TVGV), 447-467 (VAFI…PYMY), and 478-498 (TGFV…FLVP).

It belongs to the major facilitator superfamily. Sugar transporter (TC 2.A.1.1) family.

It localises to the cytoplasmic vesicle membrane. Its function is as follows. MFS transporter; part of the gene cluster that mediates the biosynthesis of the antitumor cytotoxic peptidyl alkaloids fumiquinazolines that confer a dual-usage capability to defend against phagocytes in the environment and animal hosts. Probably involved in fumiquinazolines metabolism and transport. This chain is MFS transporter fmqE, found in Aspergillus fumigatus (strain ATCC MYA-4609 / CBS 101355 / FGSC A1100 / Af293) (Neosartorya fumigata).